The chain runs to 2065 residues: Cytoskeleton-associated protein 5-A (2065 aa).

2 TOG regions span residues 1 to 240 and 264 to 515; these read MGDD…DLKA and VDAY…KETK. HEAT repeat units lie at residues 120-157, 160-197, 270-311, 314-352, 356-393, 395-432, and 436-477; these read EKAEVVQEELLKGLDNKNPKIVVACVETVRKALSEFGS, MTLKPIIKVLPKLFESREKAIRDEAKLLAVEIYRWIRD, LEAV…NPKI, GDFADLVKALKTVVGKDTNVMLVALAAKCIAGLAAGLRK, SYAGHIVPTILEKFKEKKPQVVQALQEAIDAVFLTTTL, NISEDVLAVMDNKNPAIKQQTSLFLARSFRHCTPSTLP, and LKPF…VNPF. A disordered region spans residues 500-574; that stretch reads NGKKGGAAAG…GATAKGKKAV (75 aa). Low complexity predominate over residues 538–568; the sequence is KAAAAPKKAPAAKPGGPVKKAKAPASSGATA. The TOG 3 stretch occupies residues 644 to 808; sequence KPGFKETNFQ…LSQIDAEFEK (165 aa). 2 HEAT repeats span residues 652–689 and 748–785; these read FQVMQMKLHIVALIAQKGNFSKTSACAVLDGLVDKVGD and INVKAFISNVKTALAATNPAIRTSAITLLGVMYLYMGA. A disordered region spans residues 809 to 849; the sequence is MKGQTPPVSIRGSKHGSGRDEGEEGEEQDEDAPADVTDLLP. A compositionally biased stretch (acidic residues) spans 829 to 841; that stretch reads EGEEGEEQDEDAP. Positions 846-1090 are TOG 4; that stretch reads DLLPRTDISD…AGPPGKASSK (245 aa). 4 HEAT repeats span residues 852–889, 892–929, 933–970, and 1015–1052; these read DISDKISSDLVSKIEDKNWKIRKEGLDEVTAIINEAKF, PSIGELPSALKGRLNDSNKILVQQTLTILQQLSTAMGH, QHVKNLGMPIITVLGDSKANVRAAALGTLKSWVDQTGM, and CVPYLYNCLEDRNGDVRKKAQEALPIFMMHIGFEKMSK. A compositionally biased stretch (low complexity) spans 1074–1115; the sequence is ASMPAKPAGPPGKASSKQPPAVAQASASPPPAASSDSGSSTS. Residues 1074–1192 form a disordered region; the sequence is ASMPAKPAGP…AKDEEDKSGP (119 aa). The segment covering 1126–1163 has biased composition (polar residues); sequence PGTQASKAKTQSVSSEGNTSLNPSNTSLTPSKANTSLS. An interaction with microtubule lattice region spans residues 1150-1235; it reads NTSLTPSKAN…IEQLKTQMSP (86 aa). The tract at residues 1191-1460 is TOG 5; it reads GPIYIIVPNG…ERIKRAGKKQ (270 aa). 5 HEAT repeats span residues 1251–1288, 1295–1318, 1319–1355, 1357–1390, and 1395–1432; these read QRQIKGLAVMTEHLESEKEGVISCLDLVLKWFTLRFFD, MKCLEYLKLLFIMLSQEEYHLTEM, EGTSFLPYLMLKVGEPKDIVRKDVRAILTKMCQVYPA, KMFNFVMEGTKSKNSKQRAECLEELGCLVESYGM, and PTPAKALKEIAIHIGDRDTTVRNAALNTIVTVYNVHGE. Disordered regions lie at residues 1982 to 2001 and 2028 to 2065; these read DNAKQDERPPLTSLLSKSSA and VELDSNQTYPSTTTSSSASSTNIDDLKKRLERIKSSRK. Residues 2002–2065 form an interaction with tacc3 region; that stretch reads PAVVSSTDML…RLERIKSSRK (64 aa). Residues 2038-2048 are compositionally biased toward low complexity; sequence STTTSSSASST. The segment covering 2051-2065 has biased composition (basic and acidic residues); sequence DDLKKRLERIKSSRK.

This sequence belongs to the TOG/XMAP215 family. In terms of assembly, interacts with tacc3; two molecules of ckap5 interact with 1 molecule of tacc3 probably mediated by coiled coil domains forming a four-helix bundle. Interacts with tacc3 and clathrin forming the TACC3/ch-TOG/clathrin complex located at spindle inter-microtubules bridges. Interacts with ndc80; indicative for an association with the NDC80 comnplex.

Its subcellular location is the cytoplasm. The protein localises to the cytoskeleton. The protein resides in the spindle pole. It is found in the spindle. It localises to the microtubule organizing center. Its subcellular location is the centrosome. The protein localises to the chromosome. The protein resides in the centromere. It is found in the kinetochore. Functionally, binds to the plus end of microtubules and regulates microtubule dynamics and microtubule organization. Acts as a processive microtubule polymerase. Promotes cytoplasmic microtubule nucleation and elongation. Plays a major role in organizing spindle poles. In spindle formation protects kinetochore microtubules from depolymerization by kif2c and has an essential role in centrosomal microtubule assembly independently of kif2c activity. Contributes to centrosome integrity. Acts as a component of the TACC3/ch-TOG/clathrin complex proposed to contribute to stabilization of kinetochore fibers of the mitotic spindle by acting as inter-microtubule bridge. Enhances the strength of NDC80 complex-mediated kinetochore-tip microtubule attachments. This is Cytoskeleton-associated protein 5-A (ckap5-a) from Xenopus laevis (African clawed frog).